We begin with the raw amino-acid sequence, 171 residues long: Interleukin-26 (171 aa).

Residues 1 to 21 (MLVNFILRCGLLLVTLSLAIA) form the signal peptide.

It belongs to the IL-10 family. Homodimer. In terms of tissue distribution, expressed in HVS transformed T-cells but not other T-cell lines or primary stimulated T-cells. Expressed in colonic T-cells including Th17 inflammatory T-cells; the expression is significantly increased in serum of patients with Crohn's disease (at protein level).

Its subcellular location is the secreted. Its function is as follows. May play a role in local mechanisms of mucosal immunity and seems to have a pro-inflammatory function. May play a role in inflammatory bowel disease. Activates STAT1 and STAT3, MAPK1/3 (ERK1/2), JUN and AKT. Induces expression of SOCS3, TNF-alpha and IL-8, secretion of IL-8 and IL-10 and surface expression of ICAM1. Decreases proliferation of intestinal epithelial cells. Is inhibited by heparin. This Homo sapiens (Human) protein is Interleukin-26 (IL26).